Consider the following 421-residue polypeptide: D-amino acid dehydrogenase (421 aa).

FAD is bound at residue 3 to 17 (VIVLGSGVIGVASAY).

This sequence belongs to the DadA oxidoreductase family. It depends on FAD as a cofactor.

It catalyses the reaction a D-alpha-amino acid + A + H2O = a 2-oxocarboxylate + AH2 + NH4(+). It functions in the pathway amino-acid degradation; D-alanine degradation; NH(3) and pyruvate from D-alanine: step 1/1. Functionally, oxidative deamination of D-amino acids. This chain is D-amino acid dehydrogenase, found in Acinetobacter baumannii (strain SDF).